The following is a 121-amino-acid chain: Putative membrane protein insertion efficiency factor (121 aa).

The protein belongs to the UPF0161 family.

The protein localises to the cell inner membrane. Could be involved in insertion of integral membrane proteins into the membrane. This Rhodopseudomonas palustris (strain HaA2) protein is Putative membrane protein insertion efficiency factor.